Reading from the N-terminus, the 840-residue chain is Probable sulfate permease C869.05c (840 aa).

The next 12 membrane-spanning stretches (helical) occupy residues 120-140, 148-168, 173-193, 208-228, 230-250, 278-298, 315-335, 410-430, 447-467, 470-490, 505-525, and 527-547; these read WLINDLIAGITVGCVVVPQGM, LPSEYGLYSSFVGVAIYCFFA, VSIGPVAVMSLITAKVIANVM, LALLAGAITCGIGLLRLGFII, FIPVPAVAGFTTGSALNILSG, LPDTTVDAAFGLVSLFILFFT, AFFLTNTLRSAVVVIVGTAIS, LIAMGVTNLIGIFFNAYPATG, IAGIFTAAVVILSLYCLTDAF, IPNAILSAVIIHAVTDLILPM, CIFFISVIVSVFSSIENGIYV, and VCLAAALLLLRIAKPHGSFLG. Positions 578–733 constitute an STAS domain; the sequence is NLEIQSPPPG…CVEVAAPLRD (156 aa). Ser823 bears the Phosphoserine mark.

This sequence belongs to the SLC26A/SulP transporter (TC 2.A.53) family.

It is found in the membrane. Its function is as follows. High affinity uptake of sulfate into the cell. In Schizosaccharomyces pombe (strain 972 / ATCC 24843) (Fission yeast), this protein is Probable sulfate permease C869.05c.